A 503-amino-acid polypeptide reads, in one-letter code: Glycerol kinase (503 aa).

Thr-14 provides a ligand contact to ADP. Residues Thr-14, Thr-15, and Ser-16 each coordinate ATP. Thr-14 lines the sn-glycerol 3-phosphate pocket. An ADP-binding site is contributed by Arg-18. Sn-glycerol 3-phosphate is bound by residues Arg-84, Glu-85, Tyr-136, and Asp-246. 5 residues coordinate glycerol: Arg-84, Glu-85, Tyr-136, Asp-246, and Gln-247. ADP-binding residues include Thr-268 and Gly-311. Residues Thr-268, Gly-311, Gln-315, and Gly-412 each contribute to the ATP site. Positions 412 and 416 each coordinate ADP.

Belongs to the FGGY kinase family. In terms of assembly, homotetramer and homodimer (in equilibrium). Heterodimer with EIIA-Glc. Binds 1 zinc ion per glycerol kinase EIIA-Glc dimer. The zinc ion is important for dimerization.

The enzyme catalyses glycerol + ATP = sn-glycerol 3-phosphate + ADP + H(+). It functions in the pathway polyol metabolism; glycerol degradation via glycerol kinase pathway; sn-glycerol 3-phosphate from glycerol: step 1/1. With respect to regulation, activity of this regulatory enzyme is affected by several metabolites. Allosterically and non-competitively inhibited by fructose 1,6-bisphosphate (FBP) and unphosphorylated phosphocarrier protein EIIA-Glc (III-Glc), an integral component of the bacterial phosphotransferase (PTS) system. Its function is as follows. Key enzyme in the regulation of glycerol uptake and metabolism. Catalyzes the phosphorylation of glycerol to yield sn-glycerol 3-phosphate. This is Glycerol kinase from Klebsiella pneumoniae subsp. pneumoniae (strain ATCC 700721 / MGH 78578).